The sequence spans 433 residues: Ribosomal RNA small subunit methyltransferase B (433 aa).

S-adenosyl-L-methionine contacts are provided by residues 254 to 260 (CAAPGGK), Asp-277, Asp-303, and Asp-322. The active-site Nucleophile is Cys-375.

The protein belongs to the class I-like SAM-binding methyltransferase superfamily. RsmB/NOP family.

Its subcellular location is the cytoplasm. It carries out the reaction cytidine(967) in 16S rRNA + S-adenosyl-L-methionine = 5-methylcytidine(967) in 16S rRNA + S-adenosyl-L-homocysteine + H(+). Functionally, specifically methylates the cytosine at position 967 (m5C967) of 16S rRNA. The protein is Ribosomal RNA small subunit methyltransferase B of Sodalis glossinidius (strain morsitans).